A 156-amino-acid chain; its full sequence is 6,7-dimethyl-8-ribityllumazine synthase (156 aa).

Residues Phe-23, 57–59 (SWE), and 81–83 (AVV) each bind 5-amino-6-(D-ribitylamino)uracil. 86–87 (ET) is a (2S)-2-hydroxy-3-oxobutyl phosphate binding site. Catalysis depends on His-89, which acts as the Proton donor. Phe-114 contributes to the 5-amino-6-(D-ribitylamino)uracil binding site. Arg-128 is a binding site for (2S)-2-hydroxy-3-oxobutyl phosphate.

The protein belongs to the DMRL synthase family.

It catalyses the reaction (2S)-2-hydroxy-3-oxobutyl phosphate + 5-amino-6-(D-ribitylamino)uracil = 6,7-dimethyl-8-(1-D-ribityl)lumazine + phosphate + 2 H2O + H(+). The protein operates within cofactor biosynthesis; riboflavin biosynthesis; riboflavin from 2-hydroxy-3-oxobutyl phosphate and 5-amino-6-(D-ribitylamino)uracil: step 1/2. In terms of biological role, catalyzes the formation of 6,7-dimethyl-8-ribityllumazine by condensation of 5-amino-6-(D-ribitylamino)uracil with 3,4-dihydroxy-2-butanone 4-phosphate. This is the penultimate step in the biosynthesis of riboflavin. The protein is 6,7-dimethyl-8-ribityllumazine synthase of Salinibacter ruber (strain DSM 13855 / M31).